Here is a 150-residue protein sequence, read N- to C-terminus: Large ribosomal subunit protein bL9 (150 aa).

The protein belongs to the bacterial ribosomal protein bL9 family.

In terms of biological role, binds to the 23S rRNA. This chain is Large ribosomal subunit protein bL9, found in Streptococcus pyogenes serotype M5 (strain Manfredo).